A 188-amino-acid chain; its full sequence is Elongation factor P (188 aa).

It belongs to the elongation factor P family.

The protein localises to the cytoplasm. It functions in the pathway protein biosynthesis; polypeptide chain elongation. Involved in peptide bond synthesis. Stimulates efficient translation and peptide-bond synthesis on native or reconstituted 70S ribosomes in vitro. Probably functions indirectly by altering the affinity of the ribosome for aminoacyl-tRNA, thus increasing their reactivity as acceptors for peptidyl transferase. This is Elongation factor P from Wolbachia pipientis subsp. Culex pipiens (strain wPip).